Reading from the N-terminus, the 391-residue chain is Leucine aminopeptidase 1 (391 aa).

A signal peptide spans 1–19 (MKLSIALALGATASTGVLA). Positions 20 to 91 (AVVPQQEPLI…YPTLHAGSYV (72 aa)) are excised as a propeptide. The N-linked (GlcNAc...) asparagine glycan is linked to asparagine 183. 2 residues coordinate Zn(2+): histidine 191 and aspartate 210. A glycan (N-linked (GlcNAc...) asparagine) is linked at asparagine 235. Positions 249 and 276 each coordinate Zn(2+). The cysteines at positions 325 and 329 are disulfide-linked. Histidine 358 lines the Zn(2+) pocket.

This sequence belongs to the peptidase M28 family. M28E subfamily. Monomer. The cofactor is Zn(2+).

The protein localises to the secreted. Extracellular aminopeptidase that allows assimilation of proteinaceous substrates. This chain is Leucine aminopeptidase 1 (lap1), found in Aspergillus niger (strain ATCC MYA-4892 / CBS 513.88 / FGSC A1513).